Here is a 164-residue protein sequence, read N- to C-terminus: V-type proton ATPase subunit c' (164 aa).

Topologically, residues 1–15 are lumenal; the sequence is MTDDLVNEYAPAFAP. Residues 16-36 form a helical membrane-spanning segment; sequence FFGFAGCAAAMILSSLGAAIG. The Cytoplasmic segment spans residues 37 to 58; that stretch reads TAKSGIGISGIGTFRPELIMKS. A helical membrane pass occupies residues 59–79; sequence LIPVVMSGILAVYGLVVAVLV. Topologically, residues 80–97 are lumenal; sequence AGGLSPTEEYTLFNGFMH. Residues 98 to 118 traverse the membrane as a helical segment; it reads LAAGLCVGFACLSSGYAIGIV. The Cytoplasmic portion of the chain corresponds to 119–135; the sequence is GDVGVRKFMHQPRLFVG. The helical transmembrane segment at 136-156 threads the bilayer; sequence IVLILIFAEVLGLYGMIIALI. The Lumenal portion of the chain corresponds to 157–164; the sequence is LNTRGSGN.

The protein belongs to the V-ATPase proteolipid subunit family. V-ATPase is a heteromultimeric enzyme composed of a peripheral catalytic V1 complex (components A to H) attached to an integral membrane V0 proton pore complex (components: a, c, c', c'', d, e, f and VOA1). The decameric c-ring forms the proton-conducting pore, and is composed of eight proteolipid subunits c, one subunit c' and one subunit c''.

It is found in the vacuole membrane. In terms of biological role, proton-conducting pore forming subunit of the V0 complex of vacuolar(H+)-ATPase (V-ATPase), a multisubunit enzyme composed of a peripheral complex (V1) that hydrolyzes ATP and a membrane integral complex (V0) that translocates protons. V-ATPase is responsible for acidifying and maintaining the pH of intracellular compartments. In Eremothecium gossypii (strain ATCC 10895 / CBS 109.51 / FGSC 9923 / NRRL Y-1056) (Yeast), this protein is V-type proton ATPase subunit c' (VMA11).